We begin with the raw amino-acid sequence, 412 residues long: CCA-adding enzyme (412 aa).

Residues S41 and K44 each contribute to the ATP site. Residues S41 and K44 each coordinate CTP. Residues D53, D55, and D106 each coordinate Mg(2+). Positions 129, 149, and 158 each coordinate ATP. The CTP site is built by H129, K149, and Y158.

Belongs to the tRNA nucleotidyltransferase/poly(A) polymerase family. Archaeal CCA-adding enzyme subfamily. In terms of assembly, homodimer. Forms a tetramer upon binding two tRNAs. However, tRNA-induced tetramer formation is not required for CCA addition. The cofactor is Mg(2+).

It catalyses the reaction a tRNA precursor + 2 CTP + ATP = a tRNA with a 3' CCA end + 3 diphosphate. The enzyme catalyses a tRNA with a 3' CCA end + 2 CTP + ATP = a tRNA with a 3' CCACCA end + 3 diphosphate. Functionally, catalyzes the addition and repair of the essential 3'-terminal CCA sequence in tRNAs without using a nucleic acid template. Adds these three nucleotides in the order of C, C, and A to the tRNA nucleotide-73, using CTP and ATP as substrates and producing inorganic pyrophosphate. tRNA 3'-terminal CCA addition is required both for tRNA processing and repair. Also involved in tRNA surveillance by mediating tandem CCA addition to generate a CCACCA at the 3' terminus of unstable tRNAs. While stable tRNAs receive only 3'-terminal CCA, unstable tRNAs are marked with CCACCA and rapidly degraded. The structural flexibility of RNA controls the choice between CCA versus CCACCA addition: following the first CCA addition cycle, nucleotide-binding to the active site triggers a clockwise screw motion, producing torque on the RNA. This ejects stable RNAs, whereas unstable RNAs are refolded while bound to the enzyme and subjected to a second CCA catalytic cycle. This chain is CCA-adding enzyme, found in Saccharolobus shibatae (strain ATCC 51178 / DSM 5389 / JCM 8931 / NBRC 15437 / B12) (Sulfolobus shibatae).